The primary structure comprises 740 residues: Folic acid synthesis protein fol1 (740 aa).

DHNA regions lie at residues 39-160 (DLIH…REID) and 161-280 (DQFF…SCFS). The interval 291–449 (IDNEAVYISL…EKIVDHDIKP (159 aa)) is HPPK. The Pterin-binding domain occupies 471-730 (TYIMAILNLT…DVYEMYKISK (260 aa)). Residues 473-740 (IMAILNLTPD…MSDAIWKEIY (268 aa)) are DHPS. Asn478 is a binding site for Mg(2+). Residues Thr517, Asp552, Asn571, Asp643, Lys683, and 718 to 720 (RVH) contribute to the (7,8-dihydropterin-6-yl)methyl diphosphate site.

This sequence in the N-terminal section; belongs to the DHNA family. It in the central section; belongs to the HPPK family. The protein in the C-terminal section; belongs to the DHPS family. It depends on Mg(2+) as a cofactor.

The enzyme catalyses 7,8-dihydroneopterin = 6-hydroxymethyl-7,8-dihydropterin + glycolaldehyde. It carries out the reaction 6-hydroxymethyl-7,8-dihydropterin + ATP = (7,8-dihydropterin-6-yl)methyl diphosphate + AMP + H(+). It catalyses the reaction (7,8-dihydropterin-6-yl)methyl diphosphate + 4-aminobenzoate = 7,8-dihydropteroate + diphosphate. It participates in cofactor biosynthesis; tetrahydrofolate biosynthesis; 2-amino-4-hydroxy-6-hydroxymethyl-7,8-dihydropteridine diphosphate from 7,8-dihydroneopterin triphosphate: step 3/4. Its pathway is cofactor biosynthesis; tetrahydrofolate biosynthesis; 2-amino-4-hydroxy-6-hydroxymethyl-7,8-dihydropteridine diphosphate from 7,8-dihydroneopterin triphosphate: step 4/4. It functions in the pathway cofactor biosynthesis; tetrahydrofolate biosynthesis; 7,8-dihydrofolate from 2-amino-4-hydroxy-6-hydroxymethyl-7,8-dihydropteridine diphosphate and 4-aminobenzoate: step 1/2. Its function is as follows. Catalyzes three sequential steps of tetrahydrofolate biosynthesis. This Pneumocystis carinii protein is Folic acid synthesis protein fol1 (fol1).